We begin with the raw amino-acid sequence, 521 residues long: Protein NRT1/ PTR FAMILY 4.2 (521 aa).

The next 12 membrane-spanning stretches (helical) occupy residues 30–50 (IVCV…FNFV), 65–85 (ANMV…GGFI), 89–109 (FVTH…GLIL), 133–153 (AILF…KASL), 172–192 (FFDW…TVVL), 204–224 (FNIS…GLPF), 297–317 (FLGL…VAQL), 338–358 (IPVP…IPLY), 381–401 (IGLG…VEAK), 413–433 (ISVL…MLTL), 451–471 (ISTA…TTLV), and 498–518 (LFYV…IFWA).

Belongs to the major facilitator superfamily. Proton-dependent oligopeptide transporter (POT/PTR) (TC 2.A.17) family. As to expression, expressed in siliques.

The protein localises to the membrane. In terms of biological role, involved in abscisic acid transport. The polypeptide is Protein NRT1/ PTR FAMILY 4.2 (NPF4.2) (Arabidopsis thaliana (Mouse-ear cress)).